The sequence spans 264 residues: Fructose-1,6-bisphosphatase/inositol-1-monophosphatase (264 aa).

Mg(2+) contacts are provided by E70, D86, L88, and D89. Substrate-binding positions include D89–T91, R185, and A190. D214 is a binding site for Mg(2+).

Belongs to the inositol monophosphatase superfamily. FBPase class 4 family. Mg(2+) is required as a cofactor.

The enzyme catalyses beta-D-fructose 1,6-bisphosphate + H2O = beta-D-fructose 6-phosphate + phosphate. It carries out the reaction a myo-inositol phosphate + H2O = myo-inositol + phosphate. In terms of biological role, phosphatase with broad specificity; it can dephosphorylate fructose 1,6-bisphosphate, and both D and L isomers of inositol-1-phosphate (I-1-P). The chain is Fructose-1,6-bisphosphatase/inositol-1-monophosphatase (suhB) from Aquifex aeolicus (strain VF5).